A 488-amino-acid chain; its full sequence is UDP-N-acetylmuramate--L-alanine ligase (488 aa).

127-133 (GTHGKTT) contributes to the ATP binding site.

The protein belongs to the MurCDEF family.

Its subcellular location is the cytoplasm. It carries out the reaction UDP-N-acetyl-alpha-D-muramate + L-alanine + ATP = UDP-N-acetyl-alpha-D-muramoyl-L-alanine + ADP + phosphate + H(+). Its pathway is cell wall biogenesis; peptidoglycan biosynthesis. In terms of biological role, cell wall formation. The polypeptide is UDP-N-acetylmuramate--L-alanine ligase (Shewanella sp. (strain ANA-3)).